The following is a 109-amino-acid chain: Large ribosomal subunit protein uL22 (109 aa).

This sequence belongs to the universal ribosomal protein uL22 family. In terms of assembly, part of the 50S ribosomal subunit.

In terms of biological role, this protein binds specifically to 23S rRNA; its binding is stimulated by other ribosomal proteins, e.g. L4, L17, and L20. It is important during the early stages of 50S assembly. It makes multiple contacts with different domains of the 23S rRNA in the assembled 50S subunit and ribosome. Its function is as follows. The globular domain of the protein is located near the polypeptide exit tunnel on the outside of the subunit, while an extended beta-hairpin is found that lines the wall of the exit tunnel in the center of the 70S ribosome. This Aromatoleum aromaticum (strain DSM 19018 / LMG 30748 / EbN1) (Azoarcus sp. (strain EbN1)) protein is Large ribosomal subunit protein uL22.